The following is a 432-amino-acid chain: Asparagine--tRNA ligase (432 aa).

It belongs to the class-II aminoacyl-tRNA synthetase family. Homodimer.

It localises to the cytoplasm. The enzyme catalyses tRNA(Asn) + L-asparagine + ATP = L-asparaginyl-tRNA(Asn) + AMP + diphosphate + H(+). This is Asparagine--tRNA ligase from Lactobacillus helveticus (strain DPC 4571).